A 644-amino-acid polypeptide reads, in one-letter code: Threonine--tRNA ligase (644 aa).

The 61-residue stretch at 1 to 61 (MPVITLPDGS…EKDTKLTIIT (61 aa)) folds into the TGS domain. The interval 242–535 (DHRRIGADLD…LIEHYEGKFP (294 aa)) is catalytic. 3 residues coordinate Zn(2+): Cys335, His386, and His512.

Belongs to the class-II aminoacyl-tRNA synthetase family. As to quaternary structure, homodimer. It depends on Zn(2+) as a cofactor.

Its subcellular location is the cytoplasm. It catalyses the reaction tRNA(Thr) + L-threonine + ATP = L-threonyl-tRNA(Thr) + AMP + diphosphate + H(+). Its function is as follows. Catalyzes the attachment of threonine to tRNA(Thr) in a two-step reaction: L-threonine is first activated by ATP to form Thr-AMP and then transferred to the acceptor end of tRNA(Thr). Also edits incorrectly charged L-seryl-tRNA(Thr). This Nitrosococcus oceani (strain ATCC 19707 / BCRC 17464 / JCM 30415 / NCIMB 11848 / C-107) protein is Threonine--tRNA ligase.